We begin with the raw amino-acid sequence, 139 residues long: Ribonuclease VapC3 (139 aa).

Residues 14–121 enclose the PINc domain; sequence EAIVLDTGAF…VATDDYTLQR (108 aa). Asp-19 contacts Mg(2+).

The protein belongs to the PINc/VapC protein family. It depends on Mg(2+) as a cofactor.

Toxic component of a type II toxin-antitoxin (TA) system. An RNase. The protein is Ribonuclease VapC3 of Aeropyrum pernix (strain ATCC 700893 / DSM 11879 / JCM 9820 / NBRC 100138 / K1).